We begin with the raw amino-acid sequence, 298 residues long: Putative insertion sequence ATP-binding protein y4iQ/y4nD/y4sD (298 aa).

Position 114–121 (114–121 (GPPGGGKS)) interacts with ATP. A disordered region spans residues 276 to 298 (RQSEHDETLASDNQHDTFMPTAT).

This sequence belongs to the IS21/IS1162 putative ATP-binding protein family.

This Sinorhizobium fredii (strain NBRC 101917 / NGR234) protein is Putative insertion sequence ATP-binding protein y4iQ/y4nD/y4sD.